The primary structure comprises 459 residues: Cysteine--tRNA ligase (459 aa).

C28 is a binding site for Zn(2+). A 'HIGH' region motif is present at residues V30 to H40. 3 residues coordinate Zn(2+): C209, H234, and E238. The 'KMSKS' region motif lies at K266–S270. K269 lines the ATP pocket.

The protein belongs to the class-I aminoacyl-tRNA synthetase family. In terms of assembly, monomer. Requires Zn(2+) as cofactor.

The protein resides in the cytoplasm. It carries out the reaction tRNA(Cys) + L-cysteine + ATP = L-cysteinyl-tRNA(Cys) + AMP + diphosphate. The polypeptide is Cysteine--tRNA ligase (Shewanella baltica (strain OS195)).